Reading from the N-terminus, the 187-residue chain is NADPH-dependent 3-demethoxyubiquinone 3-hydroxylase, mitochondrial (187 aa).

The transit peptide at 1–8 (MFRVITRG) directs the protein to the mitochondrion. Lys-21 contributes to the NADH binding site. Repeat copies occupy residues 28–99 (AGEL…SALL) and 100–187 (GKEG…AEKI). Residues 28 to 187 (AGELGADRIY…KGAIAIAEKI (160 aa)) are 2 X approximate tandem repeats. Glu-30, Glu-60, His-63, Glu-112, Glu-148, and His-151 together coordinate Fe cation. NADH is bound at residue Lys-186.

It belongs to the COQ7 family. In terms of assembly, component of a multi-subunit COQ enzyme complex. Fe cation is required as a cofactor.

It is found in the mitochondrion inner membrane. Its subcellular location is the mitochondrion. The protein resides in the nucleus. It catalyses the reaction a 5-methoxy-2-methyl-3-(all-trans-polyprenyl)benzoquinone + NADH + O2 = a 3-demethylubiquinone + NAD(+) + H2O. It participates in cofactor biosynthesis; ubiquinone biosynthesis. Catalyzes the hydroxylation of the 5-methoxy-2-methyl-3-(all-trans-polyprenyl)benzoquinone at the C6 position and participates in the biosynthesis of ubiquinone. Catalyzes the reaction through a substrate-mediated reduction pathway, whereby NADH shuttles electrons to 5-methoxy-2-methyl-3-(all-trans-decaprenyl)benzoquinone, which then transfers the electrons to the two Fe(3+) centers. The binding of 5-methoxy-2-methyl-3-(all-trans-polyprenyl)benzoquinone (DMQn) mediates reduction of the diiron center by nicotinamide adenine dinucleotide (NADH) and initiates oxygen activation for subsequent DMQ hydroxylation. Also has a structural role in the COQ enzyme complex, stabilizing other COQ polypeptides. Involved in lifespan determination in a ubiquinone-independent manner. Plays a role in modulating mitochondrial stress responses, acting in the nucleus, perhaps via regulating gene expression, independent of its characterized mitochondrial function in ubiquinone biosynthesis. Plays a role in modulating polyribosome formation. This chain is NADPH-dependent 3-demethoxyubiquinone 3-hydroxylase, mitochondrial, found in Caenorhabditis elegans.